The chain runs to 735 residues: uncharacterized protein (735 aa).

The 151-residue stretch at 25–175 (DLSCLSPDLL…CIAAVLAGLL (151 aa)) folds into the GAF domain. The PAS domain occupies 185–255 (SEAARRAMLD…RQGFMRHLAT (71 aa)). The 51-residue stretch at 263–313 (RLVEVEALRADGSVFPAELTVNEHRAGGRRLFSAFVRDISDRITSRRALER) folds into the PAC domain. The GGDEF domain maps to 342-464 (GAVVLMLRDL…DGHLLHFAEH (123 aa)). The EAL domain occupies 472–732 (RLELEMALRD…VAGTLPETLA (261 aa)).

This is an uncharacterized protein from Azorhizobium caulinodans (strain ATCC 43989 / DSM 5975 / JCM 20966 / LMG 6465 / NBRC 14845 / NCIMB 13405 / ORS 571).